Consider the following 72-residue polypeptide: Sperm protein associated with the nucleus on the X chromosome N1 (72 aa).

Residues 1 to 40 are disordered; that stretch reads MEKPTSSTNGEKRKSPCDSNNKNDEMQETPNRDLVLEPSL. The segment covering 10–35 has biased composition (basic and acidic residues); the sequence is GEKRKSPCDSNNKNDEMQETPNRDLV.

It belongs to the SPAN-X family.

This chain is Sperm protein associated with the nucleus on the X chromosome N1 (SPANXN1), found in Gorilla gorilla gorilla (Western lowland gorilla).